Consider the following 506-residue polypeptide: BTB/POZ domain-containing protein At3g22104 (506 aa).

The 71-residue stretch at 6–76 folds into the BTB domain; the sequence is SDLEVDINGE…CYNDGRVAVM (71 aa). An NPH3 domain is found at 187 to 435; that stretch reads TWWFDEVLVL…LDEQQQQQQQ (249 aa). Residues 421–492 adopt a coiled-coil conformation; that stretch reads QAIETLDEQQ…MEVIKKRSKS (72 aa). The segment at 485 to 506 is disordered; the sequence is VIKKRSKSSSKGSNRSLPKLCS.

It belongs to the NPH3 family.

The protein operates within protein modification; protein ubiquitination. Its function is as follows. May act as a substrate-specific adapter of an E3 ubiquitin-protein ligase complex (CUL3-RBX1-BTB) which mediates the ubiquitination and subsequent proteasomal degradation of target proteins. The polypeptide is BTB/POZ domain-containing protein At3g22104 (Arabidopsis thaliana (Mouse-ear cress)).